The primary structure comprises 362 residues: Fructose-bisphosphate aldolase (362 aa).

Serine 63 contacts D-glyceraldehyde 3-phosphate. Residue aspartate 112 is the Proton donor of the active site. Positions 113, 147, 177, and 229 each coordinate Zn(2+). Glycine 230 contacts dihydroxyacetone phosphate. A Zn(2+)-binding site is contributed by histidine 268. Residues 269–271 and 290–293 each bind dihydroxyacetone phosphate; these read GGS and NVDT.

It belongs to the class II fructose-bisphosphate aldolase family. In terms of assembly, homodimer. The cofactor is Zn(2+).

The enzyme catalyses beta-D-fructose 1,6-bisphosphate = D-glyceraldehyde 3-phosphate + dihydroxyacetone phosphate. Its pathway is carbohydrate degradation; glycolysis; D-glyceraldehyde 3-phosphate and glycerone phosphate from D-glucose: step 4/4. In terms of biological role, catalyzes the aldol condensation of dihydroxyacetone phosphate (DHAP or glycerone-phosphate) with glyceraldehyde 3-phosphate (G3P) to form fructose 1,6-bisphosphate (FBP) in gluconeogenesis and the reverse reaction in glycolysis. The polypeptide is Fructose-bisphosphate aldolase (fba) (Neurospora crassa (strain ATCC 24698 / 74-OR23-1A / CBS 708.71 / DSM 1257 / FGSC 987)).